The primary structure comprises 722 residues: Inactive serine protease PAMR1 (722 aa).

Residues 1–21 (MALLVWSSLVVASLHLLGTAA) form the signal peptide. A glycan (N-linked (GlcNAc...) asparagine) is linked at Asn-98. 8 disulfide bridges follow: Cys-130/Cys-152, Cys-179/Cys-201, Cys-241/Cys-252, Cys-246/Cys-262, Cys-264/Cys-273, Cys-282/Cys-331, Cys-317/Cys-344, and Cys-416/Cys-444. One can recognise a CUB domain in the interval 130–238 (CGEVIQAARG…DGFYVTFEEV (109 aa)). An EGF-like domain is found at 237-274 (EVTGCSSTPCFHDGTCIADKTGSYRCACLAGYTGRHCE). Sushi domains follow at residues 280–346 (KSCK…VCIK) and 393–446 (KPAL…SCIP). The N-linked (GlcNAc...) asparagine glycan is linked to Asn-318. One can recognise a Peptidase S1 domain in the interval 447-722 (ICGKLENFNI…FKEWLEKNMK (276 aa)). N-linked (GlcNAc...) asparagine glycosylation is present at Asn-455. Cys-491 and Cys-507 are disulfide-bonded. Asn-616 is a glycosylation site (N-linked (GlcNAc...) asparagine). 2 disulfides stabilise this stretch: Cys-632–Cys-651 and Cys-663–Cys-699.

It belongs to the peptidase S1 family.

The protein resides in the secreted. May play a role in regeneration of skeletal muscle. The chain is Inactive serine protease PAMR1 (pamr1) from Xenopus tropicalis (Western clawed frog).